The chain runs to 291 residues: Kynurenine formamidase (291 aa).

Positions 33-37 (HGGAW) match the HGGXW motif. Residue Ser-107 is the Nucleophile of the active site. Catalysis depends on residues Asp-242 and His-280.

The protein belongs to the kynurenine formamidase family. Homodimer.

It carries out the reaction N-formyl-L-kynurenine + H2O = L-kynurenine + formate + H(+). The protein operates within amino-acid degradation; L-tryptophan degradation via kynurenine pathway; L-kynurenine from L-tryptophan: step 2/2. Its function is as follows. Catalyzes the hydrolysis of N-formyl-L-kynurenine to L-kynurenine, the second step in the kynurenine pathway of tryptophan degradation. Kynurenine may be further oxidized to nicotinic acid, NAD(H) and NADP(H). Required for elimination of toxic metabolites. This is Kynurenine formamidase from Debaryomyces hansenii (strain ATCC 36239 / CBS 767 / BCRC 21394 / JCM 1990 / NBRC 0083 / IGC 2968) (Yeast).